Consider the following 488-residue polypeptide: E3 ubiquitin-protein ligase RNF8 (488 aa).

One can recognise an FHA domain in the interval 38–92; sequence VTIGRGLSVTYQLISKVCPLMISRSHCVLKQNPEGQWTIMDNKSLNGVWLNRERL. Residues 68 to 72 are required for interaction with PIWIL1; it reads QNPEG. The segment at 141–164 is disordered; the sequence is DQRMEKHKGSRTKRKFSSPGLENL. Residues 145 to 156 are compositionally biased toward basic residues; sequence EKHKGSRTKRKF. A Phosphoserine modification is found at S157. Residues 406 to 444 form an RING-type zinc finger; it reads CIICSEYFIEAVTLNCAHSFCSFCINEWMKRKVECPICR.

This sequence belongs to the RNF8 family. In terms of assembly, homodimer. Forms a E2-E3 ubiquitin ligase complex composed of the RNF8 homodimer and a E2 heterodimer of UBE2N and UBE2V2. Interacts with class III E2s, including UBE2E1, UBE2E2, and UBE2E3 and with UBE2N. Interacts with RXRA. Interacts (via FHA domain) with ATM-phosphorylated MDC1. Interacts (via FHA domain) with 'Thr-4829' phosphorylated HERC2 (via C-terminus). Interacts with PIWIL1; leading to sequester RNF8 in the cytoplasm. Interacts with WRAP53/TCAB1. As to quaternary structure, (Microbial infection) May interact with the L.monocytogenes protein actA; however, given these errors in the sequence (AJ242721), the relevance of the interaction with actA remains to be confirmed. In terms of processing, autoubiquitinated through 'Lys-48' and 'Lys-63' of ubiquitin. 'Lys-63' polyubiquitination is mediated by UBE2N. 'Lys-29'-type polyubiquitination is also observed, but it doesn't require its own functional RING-type zinc finger.

It is found in the nucleus. It localises to the cytoplasm. The protein resides in the midbody. The protein localises to the chromosome. Its subcellular location is the telomere. It carries out the reaction S-ubiquitinyl-[E2 ubiquitin-conjugating enzyme]-L-cysteine + [acceptor protein]-L-lysine = [E2 ubiquitin-conjugating enzyme]-L-cysteine + N(6)-ubiquitinyl-[acceptor protein]-L-lysine.. It functions in the pathway protein modification; protein ubiquitination. E3 ubiquitin-protein ligase that plays a key role in DNA damage signaling via 2 distinct roles: by mediating the 'Lys-63'-linked ubiquitination of histones H2A and H2AX and promoting the recruitment of DNA repair proteins at double-strand breaks (DSBs) sites, and by catalyzing 'Lys-48'-linked ubiquitination to remove target proteins from DNA damage sites. Following DNA DSBs, it is recruited to the sites of damage by ATM-phosphorylated MDC1 and catalyzes the 'Lys-63'-linked ubiquitination of histones H2A and H2AX, thereby promoting the formation of TP53BP1 and BRCA1 ionizing radiation-induced foci (IRIF). Also controls the recruitment of UIMC1-BRCC3 (RAP80-BRCC36) and PAXIP1/PTIP to DNA damage sites. Promotes the recruitment of NBN to DNA damage sites by catalyzing 'Lys-6'-linked ubiquitination of NBN. Also recruited at DNA interstrand cross-links (ICLs) sites and catalyzes 'Lys-63'-linked ubiquitination of histones H2A and H2AX, leading to recruitment of FAAP20 and Fanconi anemia (FA) complex, followed by interstrand cross-link repair. H2A ubiquitination also mediates the ATM-dependent transcriptional silencing at regions flanking DSBs in cis, a mechanism to avoid collision between transcription and repair intermediates. Promotes the formation of 'Lys-63'-linked polyubiquitin chains via interactions with the specific ubiquitin-conjugating UBE2N/UBC13 and ubiquitinates non-histone substrates such as PCNA. Substrates that are polyubiquitinated at 'Lys-63' are usually not targeted for degradation. Also catalyzes the formation of 'Lys-48'-linked polyubiquitin chains via interaction with the ubiquitin-conjugating UBE2L6/UBCH8, leading to degradation of substrate proteins such as CHEK2, JMJD2A/KDM4A and KU80/XRCC5: it is still unclear how the preference toward 'Lys-48'- versus 'Lys-63'-linked ubiquitination is regulated but it could be due to RNF8 ability to interact with specific E2 specific ligases. For instance, interaction with phosphorylated HERC2 promotes the association between RNF8 and UBE2N/UBC13 and favors the specific formation of 'Lys-63'-linked ubiquitin chains. Promotes non-homologous end joining (NHEJ) by promoting the 'Lys-48'-linked ubiquitination and degradation the of KU80/XRCC5. Following DNA damage, mediates the ubiquitination and degradation of JMJD2A/KDM4A in collaboration with RNF168, leading to unmask H4K20me2 mark and promote the recruitment of TP53BP1 at DNA damage sites. Following DNA damage, mediates the ubiquitination and degradation of POLD4/p12, a subunit of DNA polymerase delta. In the absence of POLD4, DNA polymerase delta complex exhibits higher proofreading activity. In addition to its function in damage signaling, also plays a role in higher-order chromatin structure by mediating extensive chromatin decondensation. Involved in the activation of ATM by promoting histone H2B ubiquitination, which indirectly triggers histone H4 'Lys-16' acetylation (H4K16ac), establishing a chromatin environment that promotes efficient activation of ATM kinase. Required in the testis, where it plays a role in the replacement of histones during spermatogenesis. At uncapped telomeres, promotes the joining of deprotected chromosome ends by inducing H2A ubiquitination and TP53BP1 recruitment, suggesting that it may enhance cancer development by aggravating telomere-induced genome instability in case of telomeric crisis. Promotes the assembly of RAD51 at DNA DSBs in the absence of BRCA1 and TP53BP1 Also involved in class switch recombination in immune system, via its role in regulation of DSBs repair. May be required for proper exit from mitosis after spindle checkpoint activation and may regulate cytokinesis. May play a role in the regulation of RXRA-mediated transcriptional activity. Not involved in RXRA ubiquitination by UBE2E2. The protein is E3 ubiquitin-protein ligase RNF8 of Mus musculus (Mouse).